Consider the following 198-residue polypeptide: Putative NADH dehydrogenase/NAD(P)H nitroreductase XOO4267 (198 aa).

It belongs to the nitroreductase family. HadB/RutE subfamily. FMN serves as cofactor.

The chain is Putative NADH dehydrogenase/NAD(P)H nitroreductase XOO4267 from Xanthomonas oryzae pv. oryzae (strain KACC10331 / KXO85).